Consider the following 822-residue polypeptide: MTVNLTLQHASEIIGQDNVDLTLAAGASAKVSNLTVASEWLTNNTGYLVTISVNDKSGNVLSSKRAGLSVEDDWTVFPRYGIVAGSPTDQNSILVKNLEAYRKELELMKSMNINSYFFYDAYNEATDPFPEGVDSFVQKWNTWSHTQVDTKAVKELVDQVHKSGAVAMLYNMISADSNPKNPALPLAALAYNFYDSFGKKGEPMTYTIGDNPTQVYYDPANPDWQKYIAGVMKSAMDRMGFDGWQGDTIGDNRVTDYEHRNSTDEADSHMMSDSYASFINAMKDLIGEKYYITINDVNGGNDDKLAKARQDVVYNELWTNGGSVIPGRMQVAYGDLKARIDMVRNKTGKSLIVGAYMEEPGIDYTVPGGKATNGAGKDALAGKPLQADATLLVDATVAAAGGYHMSIAALANANAALNVLQSAYYPTQYLSVAKDTIRKLYNYQQFITAYENLLRGEGVTNSTQAVSTKNASGEILSKDALGVTGDQVWTFAKSGKGFSTVQMINMMGINAGWHNEEGYADNKTPDAQENLTVRLSLAGKTAQEAAKIADQVYVTSPDDWATSSMKKAQASLETDENGQPVLVISVPKLTLWNMLYIKEDTTATPVEPVTNQAGKKVDNTVTSEASSETAKSENTTVNKGSEAPTDTKPSVEAPKLDETTKPAPSVDELVNSAAVPVAIAVSETAHDKKDDNSVSNTDQGTVASDSITTPASEAASTAASTVSSEVSESVTVSSEPSETENSSEASTSESATPTTTAISESHAVVEPVASLTESESQASTSLVSETTSTIVSVAPSEVSESTSEEVILMDYQKTSIVGIDSL.

A signal peptide spans 1–38 (MTVNLTLQHASEIIGQDNVDLTLAAGASAKVSNLTVAS). Disordered stretches follow at residues 607-669 (EPVT…VDEL) and 683-788 (ETAH…ETTS). Residues 619–636 (NTVTSEASSETAKSENTT) are compositionally biased toward low complexity. Residues 693-705 (SVSNTDQGTVASD) show a composition bias toward polar residues. The segment covering 706–761 (SITTPASEAASTAASTVSSEVSESVTVSSEPSETENSSEASTSESATPTTTAISES) has biased composition (low complexity). Residues 771–788 (LTESESQASTSLVSETTS) show a composition bias toward polar residues.

It belongs to the glycosyl hydrolase 66 family.

The catalysed reaction is Endohydrolysis of (1-&gt;6)-alpha-D-glucosidic linkages in dextran.. This chain is Dextranase (dex), found in Streptococcus salivarius.